A 400-amino-acid chain; its full sequence is Exodeoxyribonuclease 7 large subunit (400 aa).

The protein belongs to the XseA family. In terms of assembly, heterooligomer composed of large and small subunits.

It is found in the cytoplasm. The enzyme catalyses Exonucleolytic cleavage in either 5'- to 3'- or 3'- to 5'-direction to yield nucleoside 5'-phosphates.. Bidirectionally degrades single-stranded DNA into large acid-insoluble oligonucleotides, which are then degraded further into small acid-soluble oligonucleotides. The polypeptide is Exodeoxyribonuclease 7 large subunit (Clostridium kluyveri (strain NBRC 12016)).